The sequence spans 286 residues: Spermidine/putrescine transport system permease protein PotB homolog (286 aa).

A run of 6 helical transmembrane segments spans residues 10–30 (AVPFFVLMVIFFVVPMAWIIV), 62–82 (LWTATVTVLVALLVAFPFCYF), 94–114 (FVIALATAPIWSSFLIKLIGL), 136–156 (FGSGYTLIGMIYLFTPFMFLP), 193–213 (TAILSGIALTFFPSLTSVAIA), and 248–268 (GAIIIAALITFAFYFVVIFAP). The region spanning 58–264 (FWTSLWTATV…LITFAFYFVV (207 aa)) is the ABC transmembrane type-1 domain.

The protein belongs to the binding-protein-dependent transport system permease family. CysTW subfamily.

The protein localises to the cell membrane. In terms of biological role, required for the activity of the bacterial transport system of putrescine and spermidine. The chain is Spermidine/putrescine transport system permease protein PotB homolog (potB) from Mycoplasma pneumoniae (strain ATCC 29342 / M129 / Subtype 1) (Mycoplasmoides pneumoniae).